Consider the following 428-residue polypeptide: 4-hydroxy-3-methylbut-2-en-1-yl diphosphate synthase (flavodoxin) (428 aa).

The [4Fe-4S] cluster site is built by Cys-315, Cys-318, Cys-361, and Glu-368.

It belongs to the IspG family. [4Fe-4S] cluster serves as cofactor.

The catalysed reaction is (2E)-4-hydroxy-3-methylbut-2-enyl diphosphate + oxidized [flavodoxin] + H2O + 2 H(+) = 2-C-methyl-D-erythritol 2,4-cyclic diphosphate + reduced [flavodoxin]. It participates in isoprenoid biosynthesis; isopentenyl diphosphate biosynthesis via DXP pathway; isopentenyl diphosphate from 1-deoxy-D-xylulose 5-phosphate: step 5/6. Converts 2C-methyl-D-erythritol 2,4-cyclodiphosphate (ME-2,4cPP) into 1-hydroxy-2-methyl-2-(E)-butenyl 4-diphosphate. This is 4-hydroxy-3-methylbut-2-en-1-yl diphosphate synthase (flavodoxin) from Ralstonia pickettii (strain 12J).